The sequence spans 418 residues: Sonic hedgehog protein (418 aa).

The first 23 residues, 1–23 (MRLLTRVLLVSLLTLSLVVSGLA), serve as a signal peptide directing secretion. Cysteine 24 carries the N-palmitoyl cysteine lipid modification. A Cardin-Weintraub motif is present at residues 32–38 (RRRHPKK). The Ca(2+) site is built by glutamate 89, glutamate 90, aspartate 95, threonine 125, glutamate 126, aspartate 129, and aspartate 131. Zn(2+) is bound by residues histidine 140, aspartate 147, and histidine 182. A lipid anchor (Cholesterol glycine ester) is attached at glycine 197.

The protein belongs to the hedgehog family. As to quaternary structure, interacts with HHATL/GUP1 which negatively regulates HHAT-mediated palmitoylation of the SHH N-terminus. Interacts with BOC and CDON. Interacts with HHIP. Interacts with DISP1 via its cholesterol anchor. Interacts with SCUBE2. In terms of assembly, multimer. In terms of processing, the C-terminal domain displays an autoproteolysis activity and a cholesterol transferase activity. Both activities result in the cleavage of the full-length protein and covalent attachment of a cholesterol moiety to the C-terminal of the newly generated N-terminal fragment (ShhN). Cholesterylation is required for the sonic hedgehog protein N-product targeting to lipid rafts and multimerization. ShhN is the active species in both local and long-range signaling, whereas the C-product (ShhC) is degraded in the reticulum endoplasmic. N-palmitoylation by HHAT of ShhN is required for sonic hedgehog protein N-product multimerization and full activity. It is a prerequisite for the membrane-proximal positioning and the subsequent shedding of this N-terminal peptide. Post-translationally, the lipidated N- and C-terminal peptides of ShhNp can be cleaved (shedding). The N-terminal palmitoylated peptide is cleaved at the Cardin-Weintraub (CW) motif site. The cleavage reduced the interactions with heparan sulfate. The cleavage is enhanced by SCUBE2. Expressed in the ventral midline of the neural tube and brain. Also found in the notochord and in developing fin bud. In the developing brain, expression occurs in domains that include a discrete region in the floor of the diencephalon.

The protein resides in the endoplasmic reticulum membrane. It is found in the golgi apparatus membrane. The protein localises to the cell membrane. The enzyme catalyses glycyl-L-cysteinyl-[protein] + cholesterol + H(+) = [protein]-C-terminal glycyl cholesterol ester + N-terminal L-cysteinyl-[protein]. In terms of biological role, the C-terminal part of the sonic hedgehog protein precursor displays an autoproteolysis and a cholesterol transferase activity. Both activities result in the cleavage of the full-length protein into two parts (ShhN and ShhC) followed by the covalent attachment of a cholesterol moiety to the C-terminal of the newly generated ShhN. Both activities occur in the endoplasmic reticulum. Once cleaved, ShhC is degraded in the endoplasmic reticulum. Its function is as follows. The dually lipidated sonic hedgehog protein N-product (ShhNp) is a morphogen which is essential for a variety of patterning events during development. Involved in dorso-ventral patterning of the brain and in early patterning of the developing eyes. Binds to the patched (PTCH1) receptor, which functions in association with smoothened (SMO), to activate the transcription of target genes. In the absence of SHH, PTCH1 represses the constitutive signaling activity of SMO. This Danio rerio (Zebrafish) protein is Sonic hedgehog protein (shha).